We begin with the raw amino-acid sequence, 283 residues long: NADPH-dependent 7-cyano-7-deazaguanine reductase (283 aa).

Position 90 to 92 (90 to 92 (IES)) interacts with substrate. 92 to 93 (SK) contacts NADPH. Cysteine 190 serves as the catalytic Thioimide intermediate. The Proton donor role is filled by aspartate 197. Residue 229-230 (HE) coordinates substrate. 258–259 (RG) serves as a coordination point for NADPH.

The protein belongs to the GTP cyclohydrolase I family. QueF type 2 subfamily. As to quaternary structure, homodimer.

The protein resides in the cytoplasm. The catalysed reaction is 7-aminomethyl-7-carbaguanine + 2 NADP(+) = 7-cyano-7-deazaguanine + 2 NADPH + 3 H(+). It participates in tRNA modification; tRNA-queuosine biosynthesis. In terms of biological role, catalyzes the NADPH-dependent reduction of 7-cyano-7-deazaguanine (preQ0) to 7-aminomethyl-7-deazaguanine (preQ1). The polypeptide is NADPH-dependent 7-cyano-7-deazaguanine reductase (Dechloromonas aromatica (strain RCB)).